The chain runs to 426 residues: Serine--tRNA ligase (426 aa).

231–233 (TAE) lines the L-serine pocket. 262–264 (RSE) contacts ATP. E285 is a binding site for L-serine. ATP is bound at residue 349–352 (EISS). Residue S384 coordinates L-serine.

It belongs to the class-II aminoacyl-tRNA synthetase family. Type-1 seryl-tRNA synthetase subfamily. Homodimer. The tRNA molecule binds across the dimer.

The protein resides in the cytoplasm. The enzyme catalyses tRNA(Ser) + L-serine + ATP = L-seryl-tRNA(Ser) + AMP + diphosphate + H(+). It carries out the reaction tRNA(Sec) + L-serine + ATP = L-seryl-tRNA(Sec) + AMP + diphosphate + H(+). The protein operates within aminoacyl-tRNA biosynthesis; selenocysteinyl-tRNA(Sec) biosynthesis; L-seryl-tRNA(Sec) from L-serine and tRNA(Sec): step 1/1. Its function is as follows. Catalyzes the attachment of serine to tRNA(Ser). Is also able to aminoacylate tRNA(Sec) with serine, to form the misacylated tRNA L-seryl-tRNA(Sec), which will be further converted into selenocysteinyl-tRNA(Sec). In Laribacter hongkongensis (strain HLHK9), this protein is Serine--tRNA ligase.